The primary structure comprises 1061 residues: MPNEGIPHSSQTQEQDCLQSQPVSNNEEMAIKQESGGDGEVEEYLSFRSVGDGLSTSAVGCASAAPRRGPALLHIDRHQIQAVEPSAQALELQGLGVDVYDQDVLEQGVLQQVDNAIHEASRASQLVDVEKEYRSVLDDLTSCTTSLRQINKIIEQLSPQAATSRDINRKLDSVKRQKYNKEQQLKKITAKQKHLQAILGGAEVKIELDHASLEEDAEPGPSSLGSMLMPVQETAWEELIRTGQMTPFGTQIPQKQEKKPRKIMLNEASGFEKYLADQAKLSFERKKQGCNKRAARKAPAPVTPPAPVQNKNKPNKKARVLSKKEERLKKHIKKLQKRALQFQGKVGLPKARRPWESDMRPEAEGDSEGEESEYFPTEEEEEEEDDEVEGAEADLSGDGTDYELKPLPKGGKRQKKVPVQEIDDDFFPSSGEEAEAASVGEGGGGGRKVGRYRDDGDEDYYKQRLSPKMPRTLSLHEITDLLETDDSIEASAIVIQPPENATAPVSDEESGDEEGGTINNLPGSLLHTAAYLIQDGSDAESDSDDPSYAPKDDSPDEVPSTFTVQQPPPSRRRKMTKILCKWKKADLTVQPVAGRVTAPPNDFFTVMRTPTEILELFLDDEVIELIVKYSNLYACSKGVHLGLTSSEFKCFLGIIFLSGYVSVPRRRMFWEQRTDVHNVLVSAAMRRDRFETIFSNLHVADNANLDPVDKFSKLRPLISKLNERCMKFVPNETYFSFDEFMVPYFGRHGCKQFIRGKPIRFGYKFWCGATCLGYICWFQPYQGKNPNTKHEEYGVGASLVLQFSEALTEAHPGQYHFVFNNFFTSIALLDKLSSMGHQATGTVRKDHIDRVPLESDVALKKKERGTFDYRIDGKGNIVCRWNDNSVVTVASSGAGIHPLCLVSRYSQKLKKKIQVQQPNMIKVYNQFMGGVDRADENIDKYRASIRGKKWYSSPLLFCFELVLQNAWQLHKTYDEKPVDFLEFRRRVVCHYLETHGHPPEPGQKGRPQKRNIDSRYDGINHVIVKQGKQTRCAECHKNTTFRCEKCDVALHVKCSVEYHTE.

Positions 1–39 are disordered; it reads MPNEGIPHSSQTQEQDCLQSQPVSNNEEMAIKQESGGDG. Residues 8–27 show a composition bias toward polar residues; that stretch reads HSSQTQEQDCLQSQPVSNNE. At S158 the chain carries Phosphoserine. Residue K255 forms a Glycyl lysine isopeptide (Lys-Gly) (interchain with G-Cter in SUMO2) linkage. Disordered regions lie at residues 287 to 323, 344 to 466, 494 to 521, and 537 to 573; these read KQGC…VLSK, GKVG…QRLS, VIQP…INNL, and SDAE…SRRR. Residues 353 to 363 are compositionally biased toward basic and acidic residues; the sequence is RPWESDMRPEA. A compositionally biased stretch (acidic residues) spans 364–392; that stretch reads EGDSEGEESEYFPTEEEEEEEDDEVEGAE. Phosphoserine is present on residues S429 and S430. Residues 451-462 are compositionally biased toward basic and acidic residues; sequence RYRDDGDEDYYK. The span at 506-515 shows a compositional bias: acidic residues; sequence SDEESGDEEG. S554 is subject to Phosphoserine.

In terms of tissue distribution, expressed in heart and oocytes, but not in granulosa cells (at protein level).

It is found in the nucleus. Its function is as follows. Involved in repair of DNA damage following UV irradiation, acting either in the absence of ERCC6 or synergistically with ERCC6. Involved in the regulation of gene expression. In the absence of ERCC6, induces the expression of genes characteristic of interferon-like antiviral responses. This response is almost completely suppressed in the presence of ERCC6. In the presence of ERCC6, regulates the expression of genes involved in metabolism regulation, including IGFBP5 and IGFBP7. In vitro binds to PGBD3-related transposable elements, called MER85s; these non-autonomous 140 bp elements are characterized by the presence of PGBD3 terminal inverted repeats and the absence of internal transposase ORF. The protein is Chimeric ERCC6-PGBD3 protein of Homo sapiens (Human).